We begin with the raw amino-acid sequence, 635 residues long: MAQNHMSETMNDISAESPDQPEPPRTGYGVIQAYLKTLDSSPGVYRMLDHESRVLYVGKARNLRARVSNYTRPGHTQRIETMISQTSRMMFLTTRTETEALLLEQNLIKQLKPKYNVLLRDDKSFPYIMVSKNHAFPQLKKHRGARKGKASFFGPFASAGAVNRTLNQLQKAFLLRNCTDTMFENRTRPCLQYQIKRCSGPCVGKISQADYADSVRDAERFLAGRSTKIQEELGAEMQAASEAMEYERAAALRDRIKALTQVQSAQGINPRGVSEADIIGLHLENGLACVQVFFIRANQNWGNQDFYPRVAEDMSAAEVMEAFIGQFYDNKDVPRQLILSDDIENADLMAVALSEKARRKVEIVVPQRGEKTELVASAVRNARESLARRMSESATQAKLLRGIADAFGLEAPPNRIEVYDNSHIQGTNAVGGMIVMGPEGFMKNAYRKFNIKDGEVIAGDDFGMMKAVLNRRFSRLLKEDPDRQKGMWPDLLLIDGGAGQVSAVAEIMEEHGVQDIPMVGVAKGVDRDHGKEEFYRPGENAFALQRNDPVLYFIQRMRDEAHRFAIGTHRAKRAKSLVANPLDDIPGVGARRKKALLTHFGSAKAVSRANLSDLKAVDGVSDALAETIYNYFQVR.

Polar residues predominate over residues Met-1 to Ser-14. The interval Met-1–Gly-27 is disordered. In terms of domain architecture, GIY-YIG spans Ser-40 to Val-117. The region spanning Thr-227 to Val-262 is the UVR domain.

The protein belongs to the UvrC family. In terms of assembly, interacts with UvrB in an incision complex.

It localises to the cytoplasm. The UvrABC repair system catalyzes the recognition and processing of DNA lesions. UvrC both incises the 5' and 3' sides of the lesion. The N-terminal half is responsible for the 3' incision and the C-terminal half is responsible for the 5' incision. The chain is UvrABC system protein C from Ruegeria sp. (strain TM1040) (Silicibacter sp.).